Here is a 732-residue protein sequence, read N- to C-terminus: Catalase-peroxidase (732 aa).

The tryptophyl-tyrosyl-methioninium (Trp-Tyr) (with M-246) cross-link spans 97-220 (WHSAGTYRTS…LAAVQMGLIY (124 aa)). Catalysis depends on His-98, which acts as the Proton acceptor. Residues 220–246 (YVNPEGPDGNPDPVAAGRDIRETFARM) constitute a cross-link (tryptophyl-tyrosyl-methioninium (Tyr-Met) (with W-97)). A heme b-binding site is contributed by His-261.

This sequence belongs to the peroxidase family. Peroxidase/catalase subfamily. In terms of assembly, homodimer or homotetramer. It depends on heme b as a cofactor. In terms of processing, formation of the three residue Trp-Tyr-Met cross-link is important for the catalase, but not the peroxidase activity of the enzyme.

It carries out the reaction H2O2 + AH2 = A + 2 H2O. The catalysed reaction is 2 H2O2 = O2 + 2 H2O. Functionally, bifunctional enzyme with both catalase and broad-spectrum peroxidase activity. The polypeptide is Catalase-peroxidase (Pelodictyon phaeoclathratiforme (strain DSM 5477 / BU-1)).